The chain runs to 212 residues: MTSSDQPERGSGDAAVQAAAERAEQTRGRNVPQFDDLPGVGDTANLRLGPELNQACLALLPLVGVWRGDGEAKHPSLEESYWFRQQVSFAHDGRPFLFYESRAWRLDREGGEVVAPDFREVGWLRPQPDDTIEFLLVHSGGLSEMFFGKPRNQTTWEFGTDAVVRTPSAEDATAASRLYGVVEGALAYVEERATSEHELQPRLSAKLDRVVG.

Residues 1–11 (MTSSDQPERGS) show a composition bias toward basic and acidic residues. The disordered stretch occupies residues 1–36 (MTSSDQPERGSGDAAVQAAAERAEQTRGRNVPQFDD). Positions 64 to 70 (GVWRGDG) match the GXWXGXG motif.

This sequence belongs to the nitrobindin family.

The polypeptide is Ferric nitrobindin-like protein (Saccharopolyspora erythraea (strain ATCC 11635 / DSM 40517 / JCM 4748 / NBRC 13426 / NCIMB 8594 / NRRL 2338)).